Reading from the N-terminus, the 226-residue chain is Eukaryotic translation initiation factor 3 subunit K (226 aa).

In terms of domain architecture, PCI spans 42–200 (YNLDANLSLL…QLIVLPRNEF (159 aa)).

The protein belongs to the eIF-3 subunit K family. As to quaternary structure, component of the eukaryotic translation initiation factor 3 (eIF-3) complex.

It is found in the cytoplasm. Functionally, component of the eukaryotic translation initiation factor 3 (eIF-3) complex, which is involved in protein synthesis of a specialized repertoire of mRNAs and, together with other initiation factors, stimulates binding of mRNA and methionyl-tRNAi to the 40S ribosome. The eIF-3 complex specifically targets and initiates translation of a subset of mRNAs involved in cell proliferation. This chain is Eukaryotic translation initiation factor 3 subunit K (TIF3K1), found in Oryza sativa subsp. japonica (Rice).